The sequence spans 213 residues: Large ribosomal subunit protein uL3 (213 aa).

Residues 122–147 form a disordered region; it reads AIKRHGQSRGPMAHGSRYHRRPGSMG.

This sequence belongs to the universal ribosomal protein uL3 family. As to quaternary structure, part of the 50S ribosomal subunit. Forms a cluster with proteins L14 and L19.

One of the primary rRNA binding proteins, it binds directly near the 3'-end of the 23S rRNA, where it nucleates assembly of the 50S subunit. The polypeptide is Large ribosomal subunit protein uL3 (Geobacillus stearothermophilus (Bacillus stearothermophilus)).